The following is a 266-amino-acid chain: Large ribosomal subunit protein eL8 (266 aa).

Residues K11, K20, and K21 each participate in a glycyl lysine isopeptide (Lys-Gly) (interchain with G-Cter in SUMO2) cross-link. K34 bears the N6-acetyllysine mark. Residue K48 forms a Glycyl lysine isopeptide (Lys-Gly) (interchain with G-Cter in SUMO2) linkage. K97 carries the post-translational modification N6-acetyllysine; alternate. K97 is covalently cross-linked (Glycyl lysine isopeptide (Lys-Gly) (interchain with G-Cter in SUMO2); alternate). Residue K125 forms a Glycyl lysine isopeptide (Lys-Gly) (interchain with G-Cter in SUMO2) linkage. K217 bears the N6-acetyllysine mark. K245 is covalently cross-linked (Glycyl lysine isopeptide (Lys-Gly) (interchain with G-Cter in SUMO2)).

It belongs to the eukaryotic ribosomal protein eL8 family. As to quaternary structure, component of the large ribosomal subunit. Interacts with CRY1. Interacts with DICER1, AGO2, TARBP2, MOV10 and EIF6; they form a large RNA-induced silencing complex (RISC).

The protein resides in the cytoplasm. Functionally, component of the large ribosomal subunit. The ribosome is a large ribonucleoprotein complex responsible for the synthesis of proteins in the cell. In Mus musculus (Mouse), this protein is Large ribosomal subunit protein eL8 (Rpl7a).